The chain runs to 208 residues: ATP-dependent Clp protease proteolytic subunit (208 aa).

Ser111 acts as the Nucleophile in catalysis. Residue His136 is part of the active site.

It belongs to the peptidase S14 family. As to quaternary structure, fourteen ClpP subunits assemble into 2 heptameric rings which stack back to back to give a disk-like structure with a central cavity, resembling the structure of eukaryotic proteasomes.

The protein resides in the cytoplasm. The enzyme catalyses Hydrolysis of proteins to small peptides in the presence of ATP and magnesium. alpha-casein is the usual test substrate. In the absence of ATP, only oligopeptides shorter than five residues are hydrolyzed (such as succinyl-Leu-Tyr-|-NHMec, and Leu-Tyr-Leu-|-Tyr-Trp, in which cleavage of the -Tyr-|-Leu- and -Tyr-|-Trp bonds also occurs).. Its function is as follows. Cleaves peptides in various proteins in a process that requires ATP hydrolysis. Has a chymotrypsin-like activity. Plays a major role in the degradation of misfolded proteins. This is ATP-dependent Clp protease proteolytic subunit from Vibrio campbellii (strain ATCC BAA-1116).